Reading from the N-terminus, the 76-residue chain is Small nuclear ribonucleoprotein G (76 aa).

Positions 4–76 (AHPPELKKFM…IIMLEALERV (73 aa)) constitute a Sm domain.

This sequence belongs to the snRNP Sm proteins family. As to quaternary structure, core component of the spliceosomal U1, U2, U4 and U5 small nuclear ribonucleoproteins (snRNPs), the building blocks of the spliceosome. Most spliceosomal snRNPs contain a common set of Sm proteins, SNRPB, SNRPD1, SNRPD2, SNRPD3, SNRPE, SNRPF and SNRPG that assemble in a heptameric protein ring on the Sm site of the small nuclear RNA to form the core snRNP. Component of the U1 snRNP. The U1 snRNP is composed of the U1 snRNA and the 7 core Sm proteins SNRPB, SNRPD1, SNRPD2, SNRPD3, SNRPE, SNRPF and SNRPG, and at least three U1 snRNP-specific proteins SNRNP70/U1-70K, SNRPA/U1-A and SNRPC/U1-C. Component of the U4/U6-U5 tri-snRNP complex composed of the U4, U6 and U5 snRNAs and at least PRPF3, PRPF4, PRPF6, PRPF8, PRPF31, SNRNP200, TXNL4A, SNRNP40, SNRPB, SNRPD1, SNRPD2, SNRPD3, SNRPE, SNRPF, SNRPG, DDX23, CD2BP2, PPIH, SNU13, EFTUD2, SART1 and USP39, plus LSM2, LSM3, LSM4, LSM5, LSM6, LSM7 and LSM8. Component of the U7 snRNP complex, or U7 Sm protein core complex, that is composed of the U7 snRNA and at least LSM10, LSM11, SNRPB, SNRPD3, SNRPE, SNRPF and SNRPG; the complex does not contain SNRPD1 and SNRPD2. Component of the minor spliceosome, which splices U12-type introns. Part of the SMN-Sm complex that contains SMN1, GEMIN2/SIP1, DDX20/GEMIN3, GEMIN4, GEMIN5, GEMIN6, GEMIN7, GEMIN8, STRAP/UNRIP and the Sm proteins SNRPB, SNRPD1, SNRPD2, SNRPD3, SNRPE, SNRPF and SNRPG; catalyzes core snRNPs assembly. Forms a 6S pICln-Sm complex composed of CLNS1A/pICln, SNRPD1, SNRPD2, SNRPE, SNRPF and SNRPG; ring-like structure where CLNS1A/pICln mimics additional Sm proteins and which is unable to assemble into the core snRNP. Interacts with GEMIN2 (via N-terminus); the interaction is direct. Interacts with SNRPE; the interaction is direct.

It is found in the cytoplasm. It localises to the cytosol. Its subcellular location is the nucleus. Its function is as follows. Plays a role in pre-mRNA splicing as a core component of the spliceosomal U1, U2, U4 and U5 small nuclear ribonucleoproteins (snRNPs), the building blocks of the spliceosome. Component of both the pre-catalytic spliceosome B complex and activated spliceosome C complexes. As a component of the minor spliceosome, involved in the splicing of U12-type introns in pre-mRNAs. As part of the U7 snRNP it is involved in histone 3'-end processing. The sequence is that of Small nuclear ribonucleoprotein G (SNRPG) from Bos taurus (Bovine).